We begin with the raw amino-acid sequence, 345 residues long: DNA-directed RNA polymerase subunit alpha (345 aa).

The tract at residues 1-234 is alpha N-terminal domain (alpha-NTD); sequence MRKNEMSTSK…DLLTTFLYVR (234 aa). The segment at 266 to 345 is alpha C-terminal domain (alpha-CTD); that stretch reads LEERVLENRF…DKKIVLNRRK (80 aa).

The protein belongs to the RNA polymerase alpha chain family. In terms of assembly, in plastids the minimal PEP RNA polymerase catalytic core is composed of four subunits: alpha, beta, beta', and beta''. When a (nuclear-encoded) sigma factor is associated with the core the holoenzyme is formed, which can initiate transcription.

The protein resides in the plastid. The protein localises to the chloroplast. The catalysed reaction is RNA(n) + a ribonucleoside 5'-triphosphate = RNA(n+1) + diphosphate. Functionally, DNA-dependent RNA polymerase catalyzes the transcription of DNA into RNA using the four ribonucleoside triphosphates as substrates. This Adiantum capillus-veneris (Maidenhair fern) protein is DNA-directed RNA polymerase subunit alpha.